The sequence spans 266 residues: Mitochondrial intermembrane space import and assembly protein 40 (266 aa).

The N-terminal 28 residues, 1–28, are a transit peptide targeting the mitochondrion; the sequence is MFRQVSVRALRRAAGRSVCASRAQMVRH. Residues 29–44 are Mitochondrial matrix-facing; that stretch reads SSTLGGGKGSYNLDMP. The chain crosses the membrane as a helical; Signal-anchor for type II membrane protein span at residues 45 to 61; it reads ALALAAGVTLLAGYMVY. At 62–266 the chain is on the mitochondrial intermembrane side; sequence PRAPKAKQAA…AESAKSDEGH (205 aa). Residues 87–98 are compositionally biased toward polar residues; it reads ASLQASAPVQAT. The interval 87-180 is disordered; it reads ASLQASAPVQ…GQQGAYNPDT (94 aa). Low complexity-rich tracts occupy residues 130–157 and 165–175; these read AEVGETQAEQAPAVETEQAAEAEQAAEA and AGEAAQGQQGA. Cystine bridges form between Cys187–Cys189, Cys198–Cys231, and Cys208–Cys221. A CHCH domain is found at 195 to 239; that stretch reads HGPCGEEFKAAFACFVYSEAEPKGIDCVEKFQVMQDCFRQHPEHY. Short sequence motifs (cx9C motif) lie at residues 198–208 and 221–231; these read CGEEFKAAFAC and CVEKFQVMQDC. The tract at residues 242–266 is disordered; the sequence is QLESEEQAVRETEAAAESAKSDEGH. Positions 248–266 are enriched in basic and acidic residues; it reads QAVRETEAAAESAKSDEGH.

In terms of assembly, monomer. The cofactor is Cu(2+). Zn(2+) serves as cofactor.

It is found in the mitochondrion inner membrane. Required for the import and folding of small cysteine-containing proteins (small Tim) in the mitochondrial intermembrane space (IMS). Forms a redox cycle with ERV1 that involves a disulfide relay system. Precursor proteins to be imported into the IMS are translocated in their reduced form into the mitochondria. The oxidized form of MIA40 forms a transient intermolecular disulfide bridge with the reduced precursor protein, resulting in oxidation of the precursor protein that now contains an intramolecular disulfide bond and is able to undergo folding in the IMS. The protein is Mitochondrial intermembrane space import and assembly protein 40 (MIA40) of Eremothecium gossypii (strain ATCC 10895 / CBS 109.51 / FGSC 9923 / NRRL Y-1056) (Yeast).